Consider the following 157-residue polypeptide: Beta-defensin 125 (157 aa).

A signal peptide spans 1–20; sequence MNILMLTFIICGLLTQVTKG. Cystine bridges form between Cys27–Cys55, Cys35–Cys49, and Cys39–Cys56. Residues 109–157 form a disordered region; the sequence is GETMTPETNTPETTVPPSETTTPETTMPPSETATSETMPPPSQTALTHN. Positions 110–145 are enriched in low complexity; the sequence is ETMTPETNTPETTVPPSETTTPETTMPPSETATSET.

The protein belongs to the beta-defensin family.

Its subcellular location is the secreted. Has antibacterial activity. The polypeptide is Beta-defensin 125 (DEFB125) (Gorilla gorilla gorilla (Western lowland gorilla)).